The chain runs to 552 residues: HTH-type transcriptional regulator SgrR (552 aa).

An HTH marR-type domain is found at M1 to R116. A DNA-binding region (H-T-H motif) is located at residues L26–A49. The solute-binding stretch occupies residues E163 to W493.

Activates the small RNA gene sgrS under glucose-phosphate stress conditions as well as yfdZ. Represses its own transcription under both stress and non-stress conditions. Might act as a sensor of the intracellular accumulation of phosphoglucose by binding these molecules in its C-terminal solute-binding domain. The chain is HTH-type transcriptional regulator SgrR from Salmonella choleraesuis (strain SC-B67).